The chain runs to 161 residues: Large ribosomal subunit protein uL11 (161 aa).

Belongs to the universal ribosomal protein uL11 family. Part of the ribosomal stalk of the 50S ribosomal subunit. Interacts with L10 and the large rRNA to form the base of the stalk. L10 forms an elongated spine to which L12 dimers bind in a sequential fashion forming a multimeric L10(L12)X complex.

Forms part of the ribosomal stalk which helps the ribosome interact with GTP-bound translation factors. The polypeptide is Large ribosomal subunit protein uL11 (Methanosarcina acetivorans (strain ATCC 35395 / DSM 2834 / JCM 12185 / C2A)).